The following is a 254-amino-acid chain: Small ribosomal subunit protein uS2 (254 aa).

Residues 225–254 (ALSERKREKDDAKLKEDEESKKASDKAEIQ) form a disordered region. Over residues 226 to 254 (LSERKREKDDAKLKEDEESKKASDKAEIQ) the composition is skewed to basic and acidic residues.

This sequence belongs to the universal ribosomal protein uS2 family.

The sequence is that of Small ribosomal subunit protein uS2 from Cytophaga hutchinsonii (strain ATCC 33406 / DSM 1761 / CIP 103989 / NBRC 15051 / NCIMB 9469 / D465).